The primary structure comprises 437 residues: GTPase Obg (437 aa).

An Obg domain is found at 2–160 (SMFLDTAKIS…RQLELELKIL (159 aa)). The 178-residue stretch at 161–338 (ADVGLVGFPS…LLEATAELLA (178 aa)) folds into the OBG-type G domain. Residues 167 to 174 (GFPSVGKS), 192 to 196 (FTTIV), 214 to 217 (DLPG), 284 to 287 (NKMD), and 319 to 321 (SSL) contribute to the GTP site. 2 residues coordinate Mg(2+): Ser-174 and Thr-194. The 79-residue stretch at 359 to 437 (GFAEAEKEFE…IGKFEFEFVD (79 aa)) folds into the OCT domain.

The protein belongs to the TRAFAC class OBG-HflX-like GTPase superfamily. OBG GTPase family. As to quaternary structure, monomer. The cofactor is Mg(2+).

It is found in the cytoplasm. Functionally, an essential GTPase which binds GTP, GDP and possibly (p)ppGpp with moderate affinity, with high nucleotide exchange rates and a fairly low GTP hydrolysis rate. Plays a role in control of the cell cycle, stress response, ribosome biogenesis and in those bacteria that undergo differentiation, in morphogenesis control. The sequence is that of GTPase Obg from Streptococcus pyogenes serotype M28 (strain MGAS6180).